Reading from the N-terminus, the 200-residue chain is Recombination protein RecR (200 aa).

A C4-type zinc finger spans residues 57–72; that stretch reads CRQCRTLTEQELCPQC. The Toprim domain occupies 80–175; sequence TQLCVVEGPT…VASRIAHGVP (96 aa).

This sequence belongs to the RecR family.

In terms of biological role, may play a role in DNA repair. It seems to be involved in an RecBC-independent recombinational process of DNA repair. It may act with RecF and RecO. In Pseudomonas putida (strain ATCC 700007 / DSM 6899 / JCM 31910 / BCRC 17059 / LMG 24140 / F1), this protein is Recombination protein RecR.